A 245-amino-acid chain; its full sequence is Proteasome subunit alpha type-7-1B (245 aa).

The protein belongs to the peptidase T1A family. As to quaternary structure, the 26S proteasome consists of a 20S proteasome core and two 19S regulatory subunits. The 20S proteasome core is composed of 28 subunits that are arranged in four stacked rings, resulting in a barrel-shaped structure. The two end rings are each formed by seven alpha subunits, and the two central rings are each formed by seven beta subunits. The catalytic chamber with the active sites is on the inside of the barrel. In terms of tissue distribution, testis specific.

The protein localises to the cytoplasm. Its subcellular location is the nucleus. Its function is as follows. The proteasome is a multicatalytic proteinase complex which is characterized by its ability to cleave peptides with Arg, Phe, Tyr, Leu, and Glu adjacent to the leaving group at neutral or slightly basic pH. The proteasome has an ATP-dependent proteolytic activity. In Drosophila virilis (Fruit fly), this protein is Proteasome subunit alpha type-7-1B (Pros28.1B).